The chain runs to 1396 residues: DNA ligase 6 (1396 aa).

2 disordered regions span residues 441-464 (KNAC…DTTP) and 562-599 (MNLT…GPGQ). 2 short sequence motifs (nuclear localization signal) span residues 572-579 (GKRGKSSG) and 886-893 (LRKISVQT). Residue glutamate 1037 participates in ATP binding. Lysine 1039 (N6-AMP-lysine intermediate) is an active-site residue. ATP-binding residues include arginine 1044, arginine 1060, glutamate 1092, and phenylalanine 1136. Glutamate 1092 provides a ligand contact to Mg(2+). Residue glutamate 1207 participates in Mg(2+) binding. Residues lysine 1212, arginine 1225, and lysine 1231 each coordinate ATP.

This sequence belongs to the ATP-dependent DNA ligase family. It depends on Mg(2+) as a cofactor. In terms of tissue distribution, mostly expressed in buds and flowers, and, to a lower extent, in stems, leaves, siliques and seeds.

The protein resides in the nucleus. The enzyme catalyses ATP + (deoxyribonucleotide)n-3'-hydroxyl + 5'-phospho-(deoxyribonucleotide)m = (deoxyribonucleotide)n+m + AMP + diphosphate.. Its function is as follows. DNA ligase that seals nicks in double-stranded DNA during DNA replication, DNA recombination and DNA repair. Required to maintain seed viability (e.g. longevity and storability) and during seed germination, probably by repairing DNA damage accumulated during seed development, storage and/or imbibition. Facilitates seed germination in cold conditions (2 degrees Celsius) and under oxidative stress (e.g. menadione, a genotoxic agent). Involved in repair of X-ray-induced damage. In terms of biological role, limits stable root transformation by A.tumefaciens T-DNA. This Arabidopsis thaliana (Mouse-ear cress) protein is DNA ligase 6.